Consider the following 514-residue polypeptide: MESTPLQYPLGLKTDSLVKQVSEVLKSLTVTKAVGAFIVLFIIIPKVFDFLRNLFSPVTSIPGPLINKFSPWPLEIATFKGKSHRFARALHRKYGPIVVLAPGMISIGDSKEIKRIIQSEDWVKSEAIYGNFRQDFHRPTLLAFTEKKAYSRRKRMLSSMFGIRYIRSLEPLMKSCVDAGVAHLNKLCDNPSKSTIINLQHFIHGLAIDTIGVTTFGGSFHVVENGSHPLPSRLKAGMKISAVMQLISWIKYIPFLPKRDPYIEKFTFDIVDKRRKEAGAVKHQDLLQHLVDVCDDSPGSEFRTSDVQDESVILLAAGSETTANAELFTVIQLLKHPEKMKKLIAEVDKWYPPSEPDRATECAYSQTGMTYLQACIDETMRLIPGQATGSPREASKQEVLLGYKIPRGTTVFPNTQEAHLDGSIWEQPEKYIPERWLEIYSRNQTSAMPYWPFSAGSRICVGKNFAFQEMHISLTTLLRKFTFEYVPGQDETTVFRIAQQLEADSYKVRVKKRF.

A helical membrane pass occupies residues 28–48; sequence LTVTKAVGAFIVLFIIIPKVF. Residues N225 and N443 are each glycosylated (N-linked (GlcNAc...) asparagine). Position 460 (C460) interacts with heme.

Belongs to the cytochrome P450 family. Requires heme as cofactor.

The protein resides in the membrane. It functions in the pathway mycotoxin biosynthesis. Functionally, cytochrome P450 monooxygenase; part of the gene cluster that mediates the biosynthesis of the mycotoxin fusarin C. Within the cluster, FUS1, FUS2, FUS8 and FUS9 are sufficient for fusarin production. The roles of the other FUS members are yet undetermined. The fusarin C synthetase FUS1 is responsible for the condensation of one acetyl-coenzyme A (CoA) unit with six malonyl-CoA units and the amide linkage of the arising heptaketide and homoserine, subsequently releasing the first intermediate, prefusarin, as an alcohol with an open ring structure. The cytochrome P450 monooxygenase FUS8 participates in multiple oxidation processes at carbon C-20 and is able to use the FUS1 product as substrate, resulting in formation of 20-hydroxy-prefusarin. This reaction seems to be essential before the 2-pyrrolidone ring closure can be catalyzed by FUS2, generating 20-hydroxy-fusarin. FUS8 is able to further oxidizes carbon C-20 after ring closure, resulting in the formation of carboxy-fusarin C. As the last step, FUS9 methylates the hydroxyl group at C-21 to generate fusarin C. Fusarin C can then rearrange to epi-fusarin C, the (z)-isomers, and fusarin A and fusarin D. The protein is Cytochrome P450 monooxygenase FUS8 of Gibberella moniliformis (strain M3125 / FGSC 7600) (Maize ear and stalk rot fungus).